Reading from the N-terminus, the 412-residue chain is Serine hydroxymethyltransferase (412 aa).

Residues Leu-117 and 121 to 123 (GHL) contribute to the (6S)-5,6,7,8-tetrahydrofolate site. The residue at position 226 (Lys-226) is an N6-(pyridoxal phosphate)lysine. A (6S)-5,6,7,8-tetrahydrofolate-binding site is contributed by 349–351 (SPF).

It belongs to the SHMT family. Homodimer. It depends on pyridoxal 5'-phosphate as a cofactor.

Its subcellular location is the cytoplasm. The catalysed reaction is (6R)-5,10-methylene-5,6,7,8-tetrahydrofolate + glycine + H2O = (6S)-5,6,7,8-tetrahydrofolate + L-serine. It participates in one-carbon metabolism; tetrahydrofolate interconversion. The protein operates within amino-acid biosynthesis; glycine biosynthesis; glycine from L-serine: step 1/1. Functionally, catalyzes the reversible interconversion of serine and glycine with tetrahydrofolate (THF) serving as the one-carbon carrier. This reaction serves as the major source of one-carbon groups required for the biosynthesis of purines, thymidylate, methionine, and other important biomolecules. Also exhibits THF-independent aldolase activity toward beta-hydroxyamino acids, producing glycine and aldehydes, via a retro-aldol mechanism. The chain is Serine hydroxymethyltransferase from Geobacillus kaustophilus (strain HTA426).